Here is a 223-residue protein sequence, read N- to C-terminus: MAVLSSRAMRAALGLAVLAVVIQLLRTWLSSKSYLFNQKDIAELAKQHAGMDFEVAFSKIIVELRKKHPGHILPDEDLQWIFVNAGGWMGSMCLLHASLTEYILLFGTAIDTGGHSGRYWADISDTVITGTFRQWKEGTTKSEVFYPGDTIVHVAGEATSVHWSGGTWMVEYGRGFIPSTMGFALADTIFSTQDFCTLFYTFRIYARCLLLETHTYLSELGLS.

Residues 1 to 7 are Lumenal-facing; the sequence is MAVLSSR. Residues 8-29 traverse the membrane as a helical segment; sequence AMRAALGLAVLAVVIQLLRTWL. At 30-223 the chain is on the cytoplasmic side; sequence SSKSYLFNQK…HTYLSELGLS (194 aa). The important for ligand-binding stretch occupies residues 98–105; sequence SLTEYILL. Residues 176 to 223 are C-terminal hydrophobic region; it reads FIPSTMGFALADTIFSTQDFCTLFYTFRIYARCLLLETHTYLSELGLS.

It belongs to the ERG2 family. Homotrimer.

The protein resides in the nucleus inner membrane. It is found in the nucleus outer membrane. It localises to the nucleus envelope. Its subcellular location is the cytoplasmic vesicle. The protein localises to the endoplasmic reticulum membrane. The protein resides in the membrane. May function in lipid transport from the endoplasmic reticulum and be involved in a wide array of cellular functions probably through regulation of the biogenesis of lipid microdomains at the plasma membrane. May regulate calcium efflux at the endoplasmic reticulum. This chain is Sigma non-opioid intracellular receptor 1 (SIGMAR1), found in Taricha granulosa (Roughskin newt).